A 731-amino-acid polypeptide reads, in one-letter code: Autophagy-related protein 20 (731 aa).

A compositionally biased stretch (polar residues) spans 1-22; sequence MSSVLRNQDNPPTISEVSSTTK. The disordered stretch occupies residues 1 to 130; that stretch reads MSSVLRNQDN…NNKSNNVSRV (130 aa). Over residues 31 to 41 the composition is skewed to basic and acidic residues; sequence KQEEKEKEKEI. Positions 69–82 are enriched in polar residues; the sequence is SFMTANSFNEGPNT. Low complexity-rich tracts occupy residues 92–102 and 113–128; these read NNNSSSNNNRG and LLLY…NNVS. In terms of domain architecture, PX spans 164 to 340; the sequence is IQITEAGNSN…KFLDPNANWG (177 aa). Arginine 205, serine 207, and lysine 231 together coordinate a 1,2-diacyl-sn-glycero-3-phospho-(1D-myo-inositol-3-phosphate). The tract at residues 253-277 is disordered; sequence SVAGSNGNSGGSGGGGASGGAGSGS. Residues 259–277 are compositionally biased toward gly residues; the sequence is GNSGGSGGGGASGGAGSGS. Residue arginine 306 participates in a 1,2-diacyl-sn-glycero-3-phospho-(1D-myo-inositol-3-phosphate) binding. The interval 586 to 626 is disordered; sequence NSQVKPKNGKYNLEQQQSSTVSPAPPPGPPPSSSSSSSSSS. Residues 608–617 show a composition bias toward pro residues; the sequence is PAPPPGPPPS.

The protein belongs to the sorting nexin family.

The protein localises to the endosome membrane. Its subcellular location is the preautophagosomal structure membrane. In terms of biological role, required for cytoplasm to vacuole transport (Cvt), pexophagy and mitophagy. Also involved in endoplasmic reticulum-specific autophagic process and is essential for the survival of cells subjected to severe ER stress. Functions in protein retrieval from the endocytic pathway. The protein is Autophagy-related protein 20 (ATG20) of Candida albicans (strain SC5314 / ATCC MYA-2876) (Yeast).